A 301-amino-acid polypeptide reads, in one-letter code: Ribosomal RNA small subunit methyltransferase A (301 aa).

S-adenosyl-L-methionine is bound by residues N23, I25, G50, E72, D97, and N149.

Belongs to the class I-like SAM-binding methyltransferase superfamily. rRNA adenine N(6)-methyltransferase family. RsmA subfamily.

The protein resides in the cytoplasm. The catalysed reaction is adenosine(1518)/adenosine(1519) in 16S rRNA + 4 S-adenosyl-L-methionine = N(6)-dimethyladenosine(1518)/N(6)-dimethyladenosine(1519) in 16S rRNA + 4 S-adenosyl-L-homocysteine + 4 H(+). Functionally, specifically dimethylates two adjacent adenosines (A1518 and A1519) in the loop of a conserved hairpin near the 3'-end of 16S rRNA in the 30S particle. May play a critical role in biogenesis of 30S subunits. This Rickettsia conorii (strain ATCC VR-613 / Malish 7) protein is Ribosomal RNA small subunit methyltransferase A.